The following is a 233-amino-acid chain: Membrane steroid-binding protein 2 (233 aa).

The chain crosses the membrane as a helical span at residues 23 to 43 (AFFTVLALAFAVYQVVSGFFV). The Cytochrome b5 heme-binding domain occupies 70–167 (EITEEELKLY…SKYVKVGTIQ (98 aa)). A steroid-binding region spans residues 70-167 (EITEEELKLY…SKYVKVGTIQ (98 aa)). Composition is skewed to basic and acidic residues over residues 169–181 (KDGEGKESSEPSE) and 202–224 (THDETSRSTGEKIAETTEKKDVA). Residues 169-233 (KDGEGKESSE…ATDDDDAAKE (65 aa)) form a disordered region. Threonine 225 carries the phosphothreonine modification.

The protein belongs to the cytochrome b5 family. MAPR subfamily.

Its subcellular location is the cell membrane. This is Membrane steroid-binding protein 2 (MSBP2) from Arabidopsis thaliana (Mouse-ear cress).